The chain runs to 430 residues: Adenylosuccinate synthetase (430 aa).

Residues 13-19 and 41-43 contribute to the GTP site; these read GDEGKGK and GHT. The active-site Proton acceptor is the Asp14. Mg(2+) contacts are provided by Asp14 and Gly41. Residues 14-17, 39-42, Thr130, Arg144, Gln225, Thr240, and Arg304 each bind IMP; these read DEGK and NAGH. Residue His42 is the Proton donor of the active site. 300–306 is a binding site for substrate; the sequence is ASTGRPR. GTP-binding positions include Arg306, 332–334, and 414–416; these read KLD and STG.

It belongs to the adenylosuccinate synthetase family. As to quaternary structure, homodimer. Requires Mg(2+) as cofactor.

The protein localises to the cytoplasm. It catalyses the reaction IMP + L-aspartate + GTP = N(6)-(1,2-dicarboxyethyl)-AMP + GDP + phosphate + 2 H(+). It participates in purine metabolism; AMP biosynthesis via de novo pathway; AMP from IMP: step 1/2. Plays an important role in the de novo pathway of purine nucleotide biosynthesis. Catalyzes the first committed step in the biosynthesis of AMP from IMP. This is Adenylosuccinate synthetase from Xanthomonas campestris pv. campestris (strain 8004).